A 283-amino-acid chain; its full sequence is Pre-mRNA-splicing factor CWC23 (283 aa).

Positions asparagine 15–leucine 87 constitute a J domain.

Belongs to the DnaJ family. As to quaternary structure, belongs to the CWC complex (or CEF1-associated complex), a spliceosome sub-complex reminiscent of a late-stage spliceosome composed of the U2, U5 and U6 snRNAs and at least BUD13, BUD31, BRR2, CDC40, CEF1, CLF1, CUS1, CWC2, CWC15, CWC21, CWC22, CWC23, CWC24, CWC25, CWC27, ECM2, HSH155, IST3, ISY1, LEA1, MSL1, NTC20, PRP8, PRP9, PRP11, PRP19, PRP21, PRP22, PRP45, PRP46, SLU7, SMB1, SMD1, SMD2, SMD3, SMX2, SMX3, SNT309, SNU114, SPP2, SYF1, SYF2, RSE1 and YJU2.

Its subcellular location is the cytoplasm. The protein localises to the nucleus. Functionally, involved in pre-mRNA splicing. May be involved in endoplasmic reticulum-associated protein degradation (ERAD) and required for growth at low and high temperatures. The polypeptide is Pre-mRNA-splicing factor CWC23 (CWC23) (Saccharomyces cerevisiae (strain ATCC 204508 / S288c) (Baker's yeast)).